The sequence spans 359 residues: Phospho-N-acetylmuramoyl-pentapeptide-transferase (359 aa).

Helical transmembrane passes span T26–R46, G75–I95, Y97–Y117, L134–F154, V166–A186, G197–A217, G233–W253, V261–V281, I286–V306, and K336–L356.

Belongs to the glycosyltransferase 4 family. MraY subfamily. Mg(2+) is required as a cofactor.

It localises to the cell inner membrane. It catalyses the reaction UDP-N-acetyl-alpha-D-muramoyl-L-alanyl-gamma-D-glutamyl-meso-2,6-diaminopimeloyl-D-alanyl-D-alanine + di-trans,octa-cis-undecaprenyl phosphate = di-trans,octa-cis-undecaprenyl diphospho-N-acetyl-alpha-D-muramoyl-L-alanyl-D-glutamyl-meso-2,6-diaminopimeloyl-D-alanyl-D-alanine + UMP. It participates in cell wall biogenesis; peptidoglycan biosynthesis. Functionally, catalyzes the initial step of the lipid cycle reactions in the biosynthesis of the cell wall peptidoglycan: transfers peptidoglycan precursor phospho-MurNAc-pentapeptide from UDP-MurNAc-pentapeptide onto the lipid carrier undecaprenyl phosphate, yielding undecaprenyl-pyrophosphoryl-MurNAc-pentapeptide, known as lipid I. In Syntrophus aciditrophicus (strain SB), this protein is Phospho-N-acetylmuramoyl-pentapeptide-transferase.